Here is a 1119-residue protein sequence, read N- to C-terminus: Isoleucine--tRNA ligase (1119 aa).

The disordered stretch occupies residues 1 to 43 (MVPRRSRQRPASSCRTAKTARREMPYPLPAPDGQEPEAQPVTP). The 'HIGH' region motif lies at 84–94 (PFANGLPHYGH). Positions 676-680 (KVSKS) match the 'KMSKS' region motif. Residue lysine 679 participates in ATP binding.

Belongs to the class-I aminoacyl-tRNA synthetase family. IleS type 2 subfamily. In terms of assembly, monomer. The cofactor is Zn(2+).

Its subcellular location is the cytoplasm. It carries out the reaction tRNA(Ile) + L-isoleucine + ATP = L-isoleucyl-tRNA(Ile) + AMP + diphosphate. Functionally, catalyzes the attachment of isoleucine to tRNA(Ile). As IleRS can inadvertently accommodate and process structurally similar amino acids such as valine, to avoid such errors it has two additional distinct tRNA(Ile)-dependent editing activities. One activity is designated as 'pretransfer' editing and involves the hydrolysis of activated Val-AMP. The other activity is designated 'posttransfer' editing and involves deacylation of mischarged Val-tRNA(Ile). The protein is Isoleucine--tRNA ligase of Leifsonia xyli subsp. xyli (strain CTCB07).